A 663-amino-acid polypeptide reads, in one-letter code: LEAF RUST 10 DISEASE-RESISTANCE LOCUS RECEPTOR-LIKE PROTEIN KINASE-like 1.4 (663 aa).

The first 25 residues, 1 to 25, serve as a signal peptide directing secretion; it reads MYYPLSSSLMFFILFSLFYHLPCES. Residues 26–241 lie on the Extracellular side of the membrane; that stretch reads SKCESLFQCG…TSLSIGAKAG (216 aa). Residues asparagine 36, asparagine 64, asparagine 106, asparagine 137, and asparagine 208 are each glycosylated (N-linked (GlcNAc...) asparagine). Residues 242–262 form a helical membrane-spanning segment; the sequence is IAVASVSGLAILLLAGLFLCI. Residues 263-663 lie on the Cytoplasmic side of the membrane; sequence RRRRKTQDAQ…TSSSDTAASL (401 aa). The tract at residues 282–304 is disordered; that stretch reads SYSSRDTSRNPTSTTISSSSNHS. Residues 290 to 304 show a composition bias toward low complexity; that stretch reads RNPTSTTISSSSNHS. One can recognise a Protein kinase domain in the interval 334 to 609; it reads ENFSRELGDG…DEIVEILRGI (276 aa). Residues 340–348 and lysine 362 contribute to the ATP site; that span reads LGDGGFGTV. Aspartate 458 (proton acceptor) is an active-site residue. The interval 637 to 663 is disordered; it reads LLRNSVPPPISPETDKWTSSSDTAASL. Over residues 653 to 663 the composition is skewed to polar residues; the sequence is WTSSSDTAASL.

The protein belongs to the protein kinase superfamily. Ser/Thr protein kinase family.

Its subcellular location is the cell membrane. The catalysed reaction is L-seryl-[protein] + ATP = O-phospho-L-seryl-[protein] + ADP + H(+). The enzyme catalyses L-threonyl-[protein] + ATP = O-phospho-L-threonyl-[protein] + ADP + H(+). In Arabidopsis thaliana (Mouse-ear cress), this protein is LEAF RUST 10 DISEASE-RESISTANCE LOCUS RECEPTOR-LIKE PROTEIN KINASE-like 1.4.